Consider the following 541-residue polypeptide: Glucose-6-phosphate isomerase (541 aa).

Catalysis depends on glutamate 347, which acts as the Proton donor. Residues histidine 378 and lysine 506 contribute to the active site.

It belongs to the GPI family.

The protein resides in the cytoplasm. The enzyme catalyses alpha-D-glucose 6-phosphate = beta-D-fructose 6-phosphate. The protein operates within carbohydrate biosynthesis; gluconeogenesis. Its pathway is carbohydrate degradation; glycolysis; D-glyceraldehyde 3-phosphate and glycerone phosphate from D-glucose: step 2/4. Functionally, catalyzes the reversible isomerization of glucose-6-phosphate to fructose-6-phosphate. The chain is Glucose-6-phosphate isomerase from Francisella tularensis subsp. holarctica (strain OSU18).